A 331-amino-acid polypeptide reads, in one-letter code: uncharacterized protein (331 aa).

43 to 50 (GANESGKS) serves as a coordination point for ATP.

This is an uncharacterized protein from Methanocaldococcus jannaschii (strain ATCC 43067 / DSM 2661 / JAL-1 / JCM 10045 / NBRC 100440) (Methanococcus jannaschii).